Consider the following 114-residue polypeptide: MNEILVVTVNEVANARIARVVGPVYGTSIRSRTIVGNMLGGIRAIFGGSQEGYIAMVNQTRDEAIAALKAHAASLGANAVIGMRFDSGEFDAGQGQAMNEVTAYGTAVILEAVM.

This sequence belongs to the UPF0145 family.

In Acidiphilium cryptum (strain JF-5), this protein is UPF0145 protein Acry_1752.